The chain runs to 60 residues: Large ribosomal subunit protein bL32 (60 aa).

It belongs to the bacterial ribosomal protein bL32 family.

The chain is Large ribosomal subunit protein bL32 from Streptococcus gordonii (strain Challis / ATCC 35105 / BCRC 15272 / CH1 / DL1 / V288).